The primary structure comprises 600 residues: 1,8-cineole synthase 1, chloroplastic (600 aa).

The N-terminal 31 residues, 1–31 (MATLRISSALIYQNTLTHHFRLRRPHRFVCK), are a transit peptide targeting the chloroplast. Residue Asp-342 coordinates dimethylallyl diphosphate. Mg(2+) contacts are provided by Asp-342 and Asp-346. The DDXXD motif motif lies at 342–346 (DDIYD). Residues Glu-420, Arg-484, and Asn-487 each contribute to the dimethylallyl diphosphate site. Mg(2+) contacts are provided by Asn-487, Thr-491, and Glu-495.

The protein belongs to the terpene synthase family. Tpsb subfamily. Mg(2+) is required as a cofactor. Mn(2+) serves as cofactor. As to expression, predominantly expressed in roots and at much lower levels in siliques. Not found in leaves, flowers or stems. Also detected in flowers in cv. Landsberg erecta. Not expressed in root apical meristem and elongation zone. Found in the vascular system of young roots and additionally in the cortex and epidermal cell layer of older roots.

The protein resides in the plastid. It is found in the chloroplast. The enzyme catalyses (2E)-geranyl diphosphate + H2O = 1,8-cineole + diphosphate. Its pathway is secondary metabolite biosynthesis; terpenoid biosynthesis. Involved in monoterpene (C10) biosynthesis. The major product is 1,8-cineole (52%) followed by minor amounts of sabinene (14.5%), myrcene (13.3%), (-)-(1S)-beta-pinene (7.8%), (-)-(4S)-limonene (4.0%), (E)-beta-ocimene (2.7%), alpha-terpineol (2.4%), (-)-(1S)-alpha-pinene (1.9%), terpinolene (0.8%), and (+)-alpha-thujene (0.6%). The sequence is that of 1,8-cineole synthase 1, chloroplastic (TPS27) from Arabidopsis thaliana (Mouse-ear cress).